The sequence spans 423 residues: Tyrosine--tRNA ligase (423 aa).

Tyrosine 35 contacts L-tyrosine. Positions 40–49 match the 'HIGH' region motif; sequence PTAPSLHAGH. L-tyrosine-binding residues include tyrosine 170 and glutamine 174. The 'KMSKS' region motif lies at 230–234; that stretch reads KFGKS. Lysine 233 provides a ligand contact to ATP. Positions 355 to 412 constitute an S4 RNA-binding domain; the sequence is DLITDLLVATGLSASKGAARRTIAEGGVSVNNVKIDSDEWTPQASDFLHGRWLVLRRG.

This sequence belongs to the class-I aminoacyl-tRNA synthetase family. TyrS type 1 subfamily. Homodimer.

The protein localises to the cytoplasm. It catalyses the reaction tRNA(Tyr) + L-tyrosine + ATP = L-tyrosyl-tRNA(Tyr) + AMP + diphosphate + H(+). Its function is as follows. Catalyzes the attachment of tyrosine to tRNA(Tyr) in a two-step reaction: tyrosine is first activated by ATP to form Tyr-AMP and then transferred to the acceptor end of tRNA(Tyr). In Mycobacterium sp. (strain JLS), this protein is Tyrosine--tRNA ligase.